The chain runs to 413 residues: Prophage integrase IntA (413 aa).

One can recognise a Core-binding (CB) domain in the interval 105–186 (NTFLLVAERW…RINEVMIYAQ (82 aa)). The region spanning 209–386 (KNMPSIRPDQ…DYLEQRRPMM (178 aa)) is the Tyr recombinase domain. Active-site residues include R248, K275, H337, R340, and H363. Y373 serves as the catalytic O-(3'-phospho-DNA)-tyrosine intermediate.

Belongs to the 'phage' integrase family.

Its function is as follows. Integrase is necessary for integration of the phage into the host genome by site-specific recombination. In conjunction with excisionase, integrase is also necessary for excision of the prophage from the host genome. Part of the cryptic P4-like prophage CP4-57, it excises the prophage when overexpressed, which also requires integration host factor (encoded by ihfA and ihfB). Overexpression of AlpA leads to excision of the CP4-57 prophage, which inactivates ssrA (the gene upstream of the prophage) that encodes tmRNA which is required to rescue stalled ribosomes in a process known as trans-translation. The polypeptide is Prophage integrase IntA (intA) (Escherichia coli (strain K12)).